A 207-amino-acid polypeptide reads, in one-letter code: Ribonuclease HII (207 aa).

The region spanning 20 to 207 is the RNase H type-2 domain; the sequence is QLFAGVDEVG…KPVKRVLGIE (188 aa). A divalent metal cation is bound by residues aspartate 26, glutamate 27, and aspartate 118.

Belongs to the RNase HII family. The cofactor is Mn(2+). Mg(2+) serves as cofactor.

It is found in the cytoplasm. It catalyses the reaction Endonucleolytic cleavage to 5'-phosphomonoester.. Its function is as follows. Endonuclease that specifically degrades the RNA of RNA-DNA hybrids. The sequence is that of Ribonuclease HII from Aliivibrio fischeri (strain MJ11) (Vibrio fischeri).